We begin with the raw amino-acid sequence, 310 residues long: Vomeronasal type-1 receptor 50 (310 aa).

Topologically, residues 1–16 (MSKANLLHTDNNMKIT) are extracellular. Residues 17-37 (LFSEVSVGISANSILFVVHLC) traverse the membrane as a helical segment. Topologically, residues 38 to 50 (KLLHENKPKPIDL) are cytoplasmic. A helical membrane pass occupies residues 51-71 (YIAFFSITQLMLLITMGLIAV). The Extracellular portion of the chain corresponds to 72–93 (DMFMPWGRWDSTTCQSLIYLHR). Cys-85 and Cys-172 are oxidised to a cystine. Residues 94–114 (LLRGLTFCATCLLNVLWTITL) traverse the membrane as a helical segment. The Cytoplasmic portion of the chain corresponds to 115 to 134 (SPRSSCLTKFKHKSPHHISG). Residues 135–155 (AFLFFCVLYMSFSSHLLVSII) traverse the membrane as a helical segment. Residues 156–193 (ATFNSTSDNFLYVTQSCSILPVSYSRTSILSTMMTMRE) are Extracellular-facing. Asn-159 carries N-linked (GlcNAc...) asparagine glycosylation. Residues 194 to 214 (AFLIGLMALSSGYVVVLLWRH) form a helical membrane-spanning segment. Residues 215 to 237 (KKQARHLHSTSLSSKASPEQRAT) are Cytoplasmic-facing. The chain crosses the membrane as a helical span at residues 238–258 (STIMLLMGFFVVLYILDTVIF). The Extracellular segment spans residues 259–269 (QARLKFKDVST). The helical transmembrane segment at 270–290 (FFCVKIIISHSYATFSPFVFI) threads the bilayer. The Cytoplasmic portion of the chain corresponds to 291–310 (CNDKYMIKFVTSMCGRIVNV).

This sequence belongs to the G-protein coupled receptor 1 family. Expressed in a subset of sensory neurons located in the apical layer of the vomeronasal organ.

It localises to the cell membrane. Its function is as follows. Putative pheromone receptor implicated in the regulation of social and reproductive behavior. The chain is Vomeronasal type-1 receptor 50 (Vmn1r50) from Mus musculus (Mouse).